An 83-amino-acid chain; its full sequence is Small ribosomal subunit protein eS27 (83 aa).

The C4-type zinc finger occupies 37–59 (CPGCFNITTVFSHAQTVVICGSC).

The protein belongs to the eukaryotic ribosomal protein eS27 family. As to quaternary structure, component of the small ribosomal subunit (SSU). Mature yeast ribosomes consist of a small (40S) and a large (60S) subunit. The 40S small subunit contains 1 molecule of ribosomal RNA (18S rRNA) and at least 33 different proteins. The large 60S subunit contains 3 rRNA molecules (25S, 5.8S and 5S rRNA) and at least 46 different proteins. Zn(2+) is required as a cofactor.

Its subcellular location is the cytoplasm. In terms of biological role, component of the ribosome, a large ribonucleoprotein complex responsible for the synthesis of proteins in the cell. The small ribosomal subunit (SSU) binds messenger RNAs (mRNAs) and translates the encoded message by selecting cognate aminoacyl-transfer RNA (tRNA) molecules. The large subunit (LSU) contains the ribosomal catalytic site termed the peptidyl transferase center (PTC), which catalyzes the formation of peptide bonds, thereby polymerizing the amino acids delivered by tRNAs into a polypeptide chain. The nascent polypeptides leave the ribosome through a tunnel in the LSU and interact with protein factors that function in enzymatic processing, targeting, and the membrane insertion of nascent chains at the exit of the ribosomal tunnel. This chain is Small ribosomal subunit protein eS27 (rps27), found in Schizosaccharomyces pombe (strain 972 / ATCC 24843) (Fission yeast).